A 182-amino-acid chain; its full sequence is Large ribosomal subunit protein uL16 (182 aa).

The protein belongs to the universal ribosomal protein uL16 family.

This is Large ribosomal subunit protein uL16 from Thermococcus gammatolerans (strain DSM 15229 / JCM 11827 / EJ3).